Reading from the N-terminus, the 162-residue chain is Globin CTT-VIIB-7 (162 aa).

The first 16 residues, 1-16, serve as a signal peptide directing secretion; the sequence is MKFFAVLALCVVGAIA. Residues 18–162 enclose the Globin domain; the sequence is PLSADEANLV…TYAVALKSLE (145 aa). Heme b contacts are provided by H76 and H111.

It belongs to the globin family. Homodimer.

The protein is Globin CTT-VIIB-7 (CTT-7B7) of Chironomus thummi piger (Midge).